Reading from the N-terminus, the 708-residue chain is Polyribonucleotide nucleotidyltransferase (708 aa).

Mg(2+) is bound by residues Asp485 and Asp491. The KH domain maps to 552–611 (PKTYIMSIPPDKIRDVIGSGGKVINKIIAETGVKIDIKEDGKIFVMSEDSEGAKKALKII). Residues 621 to 689 (GEIYLGKVTK…NQGRINLSRK (69 aa)) form the S1 motif domain. The tract at residues 689-708 (KDAIKDSEKKEQNEKDVQKK) is disordered.

Belongs to the polyribonucleotide nucleotidyltransferase family. Mg(2+) is required as a cofactor.

It is found in the cytoplasm. It carries out the reaction RNA(n+1) + phosphate = RNA(n) + a ribonucleoside 5'-diphosphate. Functionally, involved in mRNA degradation. Catalyzes the phosphorolysis of single-stranded polyribonucleotides processively in the 3'- to 5'-direction. The sequence is that of Polyribonucleotide nucleotidyltransferase from Clostridium kluyveri (strain NBRC 12016).